The chain runs to 159 residues: Small ribosomal subunit protein uS9 (159 aa).

Belongs to the universal ribosomal protein uS9 family.

The sequence is that of Small ribosomal subunit protein uS9 from Beijerinckia indica subsp. indica (strain ATCC 9039 / DSM 1715 / NCIMB 8712).